The following is a 275-amino-acid chain: Vitamin B12-binding protein (275 aa).

The first 19 residues, 1–19 (MMNKICLYLPLFFSSLTMA), serve as a signal peptide directing secretion. The region spanning 25–272 (RVISLAPHAT…EVCEHFESVK (248 aa)) is the Fe/B12 periplasmic-binding domain. A disulfide bond links Cys185 and Cys265.

This sequence belongs to the BtuF family. The complex is composed of two ATP-binding proteins (BtuD), two transmembrane proteins (BtuC) and a solute-binding protein (BtuF).

Its subcellular location is the periplasm. Its function is as follows. Part of the ABC transporter complex BtuCDF involved in vitamin B12 import. Binds vitamin B12 and delivers it to the periplasmic surface of BtuC. The chain is Vitamin B12-binding protein from Vibrio parahaemolyticus serotype O3:K6 (strain RIMD 2210633).